The sequence spans 45 residues: Large ribosomal subunit protein bL34 (45 aa).

The interval 1–45 (MTKRTFQPNNRRRARKHGFRARMRTRAGRAILSARRGKNRAELSA) is disordered. Positions 10–27 (NRRRARKHGFRARMRTRA) are enriched in basic residues.

The protein belongs to the bacterial ribosomal protein bL34 family.

The chain is Large ribosomal subunit protein bL34 from Micrococcus luteus (strain ATCC 4698 / DSM 20030 / JCM 1464 / CCM 169 / CCUG 5858 / IAM 1056 / NBRC 3333 / NCIMB 9278 / NCTC 2665 / VKM Ac-2230) (Micrococcus lysodeikticus).